The sequence spans 401 residues: Serine/threonine transporter SstT (401 aa).

Transmembrane regions (helical) follow at residues 17–37 (IGIGVVLGVLLGLIAPKITVI), 40–60 (FGSLFVGALKAIAPLLVLTLV), 78–98 (VICLYLFGTFAAAFIAVGASY), 138–158 (ALATANYIGVLTWAAVFGLAF), 179–199 (VVGWIIGLAPFGIMGLVFDTI), 212–232 (LLLLLLVGSMIFVALVVNPLI), 295–315 (MAGAAITINILTMAAVHTLGI), and 336–356 (ASGVAGGSLLLIPVACSLFGI).

Belongs to the dicarboxylate/amino acid:cation symporter (DAACS) (TC 2.A.23) family.

The protein localises to the cell membrane. The enzyme catalyses L-serine(in) + Na(+)(in) = L-serine(out) + Na(+)(out). The catalysed reaction is L-threonine(in) + Na(+)(in) = L-threonine(out) + Na(+)(out). Functionally, involved in the import of serine and threonine into the cell, with the concomitant import of sodium (symport system). This Streptococcus suis (strain 98HAH33) protein is Serine/threonine transporter SstT.